Consider the following 449-residue polypeptide: SUPPRESSOR OF GAMMA RESPONSE 1 (449 aa).

The 154-residue stretch at 58–211 (LPRGVKFDPS…DYVVSKIFYQ (154 aa)) folds into the NAC domain. A DNA-binding region spans residues 167–217 (RGCKKIMVLYGGKAVKTNWVMHQYHLGIEEDEKEGDYVVSKIFYQQPQQLV). Basic and acidic residues predominate over residues 324 to 336 (DDKEEQEKDRDNE). The segment at 324–348 (DDKEEQEKDRDNENQGEEDPTWFDS) is disordered.

In terms of processing, phosphorylated in a DNA stress-independent manner. Hyperphosphorylated on SQ motifs upon double-strand breaks, H(2)O(2) or zeocin treatments. Hyperphosphorylation is required for SOG1 function, and unlike constitutive phosphorylation, is ATM dependent. As to expression, expressed in shoot and root apical meristems, in lateral root primordia, in the vasculature of young leaves and in the root stele.

The protein resides in the nucleus. Functionally, transcription factor regulating the transcriptional activation response to gamma irradiation. Required for stem-cell death induced by UVB or by gamma irradiation. Not required for ATM activation, but participates in pathways governed by both ATM and ATR sensor kinases. Involved in DNA damage response (DDR) system that regulates cell cycle arrest. Functional homolog of animal p53. Regulates SMR5 and SMR7 transcription. Regulates DNA repair and cytokinin signaling separately and plays a key role in controlling lateral root formation under genotoxic stress. The polypeptide is SUPPRESSOR OF GAMMA RESPONSE 1 (Arabidopsis thaliana (Mouse-ear cress)).